Reading from the N-terminus, the 493-residue chain is Amphoterin-induced protein 1 (493 aa).

Positions 1 to 27 (MQPQRDLRGLWLLLLSLFLLLFEVARA) are cleaved as a signal peptide. In terms of domain architecture, LRRNT spans 28 to 61 (GRPVVSCPANCLCASNILSCSKQQLPNVPQSLPG). The Extracellular portion of the chain corresponds to 28–372 (GRPVVSCPAN…LHGHHDTLNT (345 aa)). 2 disulfide bridges follow: Cys34/Cys40 and Cys38/Cys47. LRR repeat units follow at residues 62-83 (YTALLDLSHNNLSRLKAEWTPT), 87-108 (NLHSLLLSHNHLNFISSEAFVP), 111-132 (NLRYLDLSSNHLHTLDEFLFSG), 135-156 (ALEVLLLYNNHIVVVDRNAFED), 159-179 (QLQKLYLSQNMISRFPLELIK), and 186-206 (KLTLLDLSSNKLKKLPLTDLQ). Asn72 carries N-linked (GlcNAc...) asparagine glycosylation. Residues 221-272 (NPLECDCKLYQLFSHWQYRQLSSVMDFQEDLYCVHSKKLHNVFSLDFFNCSE) form the LRRCT domain. 3 disulfides stabilise this stretch: Cys225-Cys253, Cys227-Cys270, and Cys290-Cys341. 4 N-linked (GlcNAc...) asparagine glycosylation sites follow: Asn269, Asn315, Asn349, and Asn360. The region spanning 269–353 (NCSEYKESAW…MGETFNETLS (85 aa)) is the Ig-like C2-type domain. The chain crosses the membrane as a helical span at residues 373 to 393 (AYTTLVGCILSVVLVLIYLYL). Over 394–493 (TPCRCWCRGV…SVFSDTPIVV (100 aa)) the chain is Cytoplasmic. The tract at residues 405–493 (KPSSHQGDSL…SVFSDTPIVV (89 aa)) is disordered. A compositionally biased stretch (polar residues) spans 408 to 424 (SHQGDSLSSSMLSTTPN). The segment covering 431 to 442 (GDKDDGFDRRVA) has biased composition (basic and acidic residues). 2 positions are modified to phosphoserine: Ser477 and Ser481.

Belongs to the immunoglobulin superfamily. AMIGO family. As to quaternary structure, homodimer, and heterodimer with AMIGO2 and AMIGO3. Interacts with KCNB1.

It is found in the cell membrane. It localises to the perikaryon. The protein localises to the cell projection. Its subcellular location is the dendrite. The protein resides in the axon. In terms of biological role, promotes growth and fasciculation of neurites from cultured hippocampal neurons. May be involved in fasciculation as well as myelination of developing neural axons. May have a role in regeneration as well as neural plasticity in the adult nervous system. May mediate homophilic as well as heterophilic cell-cell interaction and contribute to signal transduction through its intracellular domain. Assembled with KCNB1 modulates the gating characteristics of the delayed rectifier voltage-dependent potassium channel KCNB1. This is Amphoterin-induced protein 1 from Rattus norvegicus (Rat).